A 477-amino-acid polypeptide reads, in one-letter code: C3a anaphylatoxin chemotactic receptor (477 aa).

The Extracellular portion of the chain corresponds to 1 to 23 (MESFDADTNSTDLHSRPLFQPQD). The N-linked (GlcNAc...) asparagine glycan is linked to Asn9. A helical membrane pass occupies residues 24–46 (IASMVILGLTCLLGLLGNGLVLW). Over 47–57 (VAGVKMKTTVN) the chain is Cytoplasmic. The helical transmembrane segment at 58–80 (TVWFLHLTLADFLCCLSLPFSLA) threads the bilayer. Topologically, residues 81–96 (HLILQGHWPYGLFLCK) are extracellular. Cys95 and Cys172 form a disulfide bridge. The chain crosses the membrane as a helical span at residues 97 to 118 (LIPSIIILNMFASVFLLTAISL). Over 119-139 (DRCLIVHKPIWCQNHRNVRTA) the chain is Cytoplasmic. Residues 140–160 (FAICGCVWVVAFVMCVPVFVY) traverse the membrane as a helical segment. Residues 161-333 (RDLFIMDNRS…TPLMAITITR (173 aa)) lie on the Extracellular side of the membrane. N-linked (GlcNAc...) asparagine glycosylation occurs at Asn168. 2 positions are modified to sulfotyrosine: Tyr174 and Tyr184. N-linked (GlcNAc...) asparagine glycans are attached at residues Asn197 and Asn201. Sulfotyrosine is present on Tyr312. A helical transmembrane segment spans residues 334–353 (LVVGFLVPFFIMVICYSLIV). At 354–370 (FRMRKTNFTKSRNKTFR) the chain is on the cytoplasmic side. The chain crosses the membrane as a helical span at residues 371 to 393 (VAVAVVTVFFICWTPYHLVGVLL). Residues 394–410 (LITDPESSLGEAVMSWD) lie on the Extracellular side of the membrane. Residues 411-431 (HMSIALASANSCFNPFLYALL) traverse the membrane as a helical segment. The Cytoplasmic portion of the chain corresponds to 432-477 (GKDFRKKARQSIKGILEAAFSEELTHSTNCTQDKASSKRNNMSTDV). The residue at position 452 (Ser452) is a Phosphoserine. A Phosphothreonine modification is found at Thr456.

The protein belongs to the G-protein coupled receptor 1 family. Interacts with VGF-derived peptide TLQP-21. As to expression, detected in varying levels in all tissues examined except the spleen. Especially abundant in heart and lung.

Its subcellular location is the cell membrane. In terms of biological role, receptor for the chemotactic and inflammatory peptide anaphylatoxin C3a. This receptor stimulates chemotaxis, granule enzyme release and superoxide anion production. The protein is C3a anaphylatoxin chemotactic receptor (C3ar1) of Mus musculus (Mouse).